We begin with the raw amino-acid sequence, 516 residues long: H/ACA ribonucleoprotein complex subunit DKC1 (516 aa).

The disordered stretch occupies residues 1–24 (MADGDGSSVKKRRKKDKRSLPDED). Catalysis depends on Asp123, which acts as the Nucleophile. Residues 294–369 (HKRLVMKDSA…VVAKIKRVIM (76 aa)) enclose the PUA domain. A disordered region spans residues 422–516 (KKEAAKVPQA…KQKEVEESSE (95 aa)). The span at 434-446 (EVERAPKRKRESE) shows a compositional bias: basic and acidic residues. Positions 453 to 464 (SPPPSPATPPPE) are enriched in pro residues. Positions 463–516 (PEELSKKEKKKKKKEKKAKEAAESGEEQVEVISESSAKKKKKKKKQKEVEESSE) form a coiled coil. A compositionally biased stretch (basic residues) spans 469 to 478 (KEKKKKKKEK).

The protein belongs to the pseudouridine synthase TruB family. Part of the H/ACA small nucleolar ribonucleoprotein (H/ACA snoRNP) complex, which contains NHP2/NOLA2, GAR1/NOLA1, NOP10/NOLA3, and DKC1/NOLA4, which is presumed to be the catalytic subunit. The complex contains a stable core formed by binding of one or two NOP10-DKC1 heterodimers to NHP2; GAR1 subsequently binds to this core via DKC1. The complex binds a box H/ACA small nucleolar RNA (snoRNA), which may target the specific site of modification within the RNA substrate.

It localises to the nucleus. The protein resides in the nucleolus. Its subcellular location is the cajal body. The catalysed reaction is uridine in 5S rRNA = pseudouridine in 5S rRNA. In terms of biological role, catalytic subunit of H/ACA small nucleolar ribonucleoprotein (H/ACA snoRNP) complex, which catalyzes pseudouridylation of rRNA. This involves the isomerization of uridine such that the ribose is subsequently attached to C5, instead of the normal N1. Each rRNA can contain up to 100 pseudouridine ('psi') residues, which may serve to stabilize the conformation of rRNAs. Required for ribosome biogenesis and telomere maintenance. The chain is H/ACA ribonucleoprotein complex subunit DKC1 (DKC1) from Gallus gallus (Chicken).